Reading from the N-terminus, the 172-residue chain is Large ribosomal subunit protein uL10 (172 aa).

This sequence belongs to the universal ribosomal protein uL10 family. As to quaternary structure, part of the ribosomal stalk of the 50S ribosomal subunit. The N-terminus interacts with L11 and the large rRNA to form the base of the stalk. The C-terminus forms an elongated spine to which L12 dimers bind in a sequential fashion forming a multimeric L10(L12)X complex.

In terms of biological role, forms part of the ribosomal stalk, playing a central role in the interaction of the ribosome with GTP-bound translation factors. In Chlorobium luteolum (strain DSM 273 / BCRC 81028 / 2530) (Pelodictyon luteolum), this protein is Large ribosomal subunit protein uL10.